The primary structure comprises 150 residues: UPF0039 protein C11D3.02c (150 aa).

An N-acetyltransferase domain is found at 9–150 (KYFNSLDVKE…IPHVEMRLEL (142 aa)).

Belongs to the UPF0039 (ElaA) family.

The polypeptide is UPF0039 protein C11D3.02c (Schizosaccharomyces pombe (strain 972 / ATCC 24843) (Fission yeast)).